A 122-amino-acid chain; its full sequence is Small ribosomal subunit protein uS13 (122 aa).

The disordered stretch occupies residues 94–122 (RGLPVRGQRTKTNARQRKGPRPAIGGRKK).

Belongs to the universal ribosomal protein uS13 family. Part of the 30S ribosomal subunit. Forms a loose heterodimer with protein S19. Forms two bridges to the 50S subunit in the 70S ribosome.

Located at the top of the head of the 30S subunit, it contacts several helices of the 16S rRNA. In the 70S ribosome it contacts the 23S rRNA (bridge B1a) and protein L5 of the 50S subunit (bridge B1b), connecting the 2 subunits; these bridges are implicated in subunit movement. Contacts the tRNAs in the A and P-sites. The sequence is that of Small ribosomal subunit protein uS13 from Rubrobacter xylanophilus (strain DSM 9941 / JCM 11954 / NBRC 16129 / PRD-1).